The following is a 391-amino-acid chain: Processive diacylglycerol beta-glucosyltransferase (391 aa).

The protein belongs to the glycosyltransferase 28 family. UgtP subfamily.

The protein resides in the cell membrane. The catalysed reaction is a 1,2-diacyl-3-O-(beta-D-glucopyranosyl)-sn-glycerol + UDP-alpha-D-glucose = a 1,2-diacyl-3-O-(beta-D-Glc-(1-&gt;6)-beta-D-Glc)-sn-glycerol + UDP + H(+). The enzyme catalyses a 1,2-diacyl-sn-glycerol + UDP-alpha-D-glucose = a 1,2-diacyl-3-O-(beta-D-glucopyranosyl)-sn-glycerol + UDP + H(+). It functions in the pathway glycolipid metabolism; diglucosyl-diacylglycerol biosynthesis. Processive glucosyltransferase involved in the biosynthesis of both the bilayer- and non-bilayer-forming membrane glucolipids. Is able to successively transfer two glucosyl residues to diacylglycerol (DAG), thereby catalyzing the formation of beta-monoglucosyl-DAG (3-O-(beta-D-glucopyranosyl)-1,2-diacyl-sn-glycerol) and beta-diglucosyl-DAG (3-O-(beta-D-glucopyranosyl-beta-(1-&gt;6)-D-glucopyranosyl)-1,2-diacyl-sn-glycerol). Beta-diglucosyl-DAG is the predominant glycolipid found in Bacillales and is also used as a membrane anchor for lipoteichoic acid (LTA). The protein is Processive diacylglycerol beta-glucosyltransferase of Staphylococcus aureus (strain MW2).